A 458-amino-acid polypeptide reads, in one-letter code: Probable ECA polymerase (458 aa).

11 helical membrane passes run 3–23 (LAQF…VLTL), 37–57 (VFFS…TCLL), 65–85 (VVPV…YAIY), 112–132 (THLT…IFFL), 154–174 (GVAL…VYFL), 180–200 (AWFF…VIVG), 201–221 (GTRA…IVRG), 222–242 (WISL…MFWL), 340–360 (LVVM…GMII), 377–397 (YKAA…IVLA), and 409–429 (VFFC…YWLF).

This sequence belongs to the WzyE family. As to quaternary structure, probably part of a complex composed of WzxE, WzyE and WzzE.

The protein localises to the cell inner membrane. It functions in the pathway bacterial outer membrane biogenesis; enterobacterial common antigen biosynthesis. Probably involved in the polymerization of enterobacterial common antigen (ECA) trisaccharide repeat units. The chain is Probable ECA polymerase from Serratia proteamaculans (strain 568).